A 192-amino-acid chain; its full sequence is Ion-translocating oxidoreductase complex subunit B (192 aa).

Residues 1–26 form a hydrophobic region; sequence MNTIWIAVGALALLGLVFGAILGYAS. In terms of domain architecture, 4Fe-4S spans 32–91; sequence EDDPVVEKIDAILPQSQCGQCGYPGCRPYAEAVGLQGEKINRCAPGGEAVMLKIAELLNV. 12 residues coordinate [4Fe-4S] cluster: Cys49, Cys52, Cys57, Cys74, Cys117, Cys120, Cys123, Cys127, Cys147, Cys150, Cys153, and Cys157. 4Fe-4S ferredoxin-type domains are found at residues 108-137 and 138-167; these read MLAV…GATR and AMHT…LRPV.

Belongs to the 4Fe4S bacterial-type ferredoxin family. RnfB subfamily. The complex is composed of six subunits: RsxA, RsxB, RsxC, RsxD, RsxE and RsxG. [4Fe-4S] cluster is required as a cofactor.

It is found in the cell inner membrane. Functionally, part of a membrane-bound complex that couples electron transfer with translocation of ions across the membrane. Required to maintain the reduced state of SoxR. This Salmonella newport (strain SL254) protein is Ion-translocating oxidoreductase complex subunit B.